Here is a 314-residue protein sequence, read N- to C-terminus: Olfactory receptor 52K2 (314 aa).

Over 1–27 (MSASNITLTHPTAFLLVGIPGLEHLHI) the chain is Extracellular. An N-linked (GlcNAc...) asparagine glycan is attached at N5. A helical membrane pass occupies residues 28–48 (WISIPFCLAYTLALLGNCTLL). Residues 49-56 (LIIQADAA) lie on the Cytoplasmic side of the membrane. A helical transmembrane segment spans residues 57–77 (LHEPMYLFLAMLAAIDLVLSS). Residues 78 to 101 (SALPKMLAIFWFRDREINFFACLA) lie on the Extracellular side of the membrane. Cysteines 99 and 191 form a disulfide. A helical membrane pass occupies residues 102–122 (QMFFLHSFSIMESAVLLAMAF). At 123-141 (DRYVAICKPLHYTKVLTGS) the chain is on the cytoplasmic side. Residues 142–162 (LITKIGMAAVARAVTLMTPLP) form a helical membrane-spanning segment. Residues 163–198 (FLLRCFHYCRGPVIAHCYCEHMAVVRLACGDTSFNN) lie on the Extracellular side of the membrane. Residues 199-219 (IYGIAVAMFIVVLDLLLVILS) form a helical membrane-spanning segment. The Cytoplasmic segment spans residues 220 to 239 (YIFILQAVLLLASQEARYKA). A helical transmembrane segment spans residues 240–260 (FGTCVSHIGAILAFYTTVVIS). At 261-275 (SVMHRVARHAAPHVH) the chain is on the extracellular side. The chain crosses the membrane as a helical span at residues 276–296 (ILLANFYLLFPPMVNPIIYGV). Residues 297 to 314 (KTKQIRESILGVFPRKDM) lie on the Cytoplasmic side of the membrane.

It belongs to the G-protein coupled receptor 1 family.

It localises to the cell membrane. Functionally, odorant receptor. The polypeptide is Olfactory receptor 52K2 (OR52K2) (Homo sapiens (Human)).